Reading from the N-terminus, the 145-residue chain is Deoxyuridine 5'-triphosphate nucleotidohydrolase (145 aa).

Residues R62–G64, N75, T79–D81, and K89 each bind substrate.

Belongs to the dUTPase family. Requires Mg(2+) as cofactor.

It catalyses the reaction dUTP + H2O = dUMP + diphosphate + H(+). It participates in pyrimidine metabolism; dUMP biosynthesis; dUMP from dCTP (dUTP route): step 2/2. In terms of biological role, this enzyme is involved in nucleotide metabolism: it produces dUMP, the immediate precursor of thymidine nucleotides and it decreases the intracellular concentration of dUTP so that uracil cannot be incorporated into DNA. This is Deoxyuridine 5'-triphosphate nucleotidohydrolase from Helicobacter pylori (strain P12).